A 642-amino-acid polypeptide reads, in one-letter code: Chaperone protein DnaK (642 aa).

T200 bears the Phosphothreonine; by autocatalysis mark. The segment covering 600–616 (EAAQQSAGAAGPMPGAP) has biased composition (low complexity). Residues 600–642 (EAAQQSAGAAGPMPGAPAEEEPSDGPRKAKGRVVDAEIVDDDK) are disordered. The segment covering 623–634 (DGPRKAKGRVVD) has biased composition (basic and acidic residues).

It belongs to the heat shock protein 70 family.

Acts as a chaperone. This Akkermansia muciniphila (strain ATCC BAA-835 / DSM 22959 / JCM 33894 / BCRC 81048 / CCUG 64013 / CIP 107961 / Muc) protein is Chaperone protein DnaK.